Here is a 316-residue protein sequence, read N- to C-terminus: tRNA dimethylallyltransferase (316 aa).

Residue 17–24 (GPTASGKT) coordinates ATP. 19 to 24 (TASGKT) is a substrate binding site. 4 interaction with substrate tRNA regions span residues 42-45 (DSAL), 166-170 (QRLSR), 247-252 (RCVGYR), and 280-287 (KRQITWLR).

It belongs to the IPP transferase family. As to quaternary structure, monomer. Requires Mg(2+) as cofactor.

It carries out the reaction adenosine(37) in tRNA + dimethylallyl diphosphate = N(6)-dimethylallyladenosine(37) in tRNA + diphosphate. In terms of biological role, catalyzes the transfer of a dimethylallyl group onto the adenine at position 37 in tRNAs that read codons beginning with uridine, leading to the formation of N6-(dimethylallyl)adenosine (i(6)A). The polypeptide is tRNA dimethylallyltransferase (Escherichia coli O6:K15:H31 (strain 536 / UPEC)).